A 480-amino-acid polypeptide reads, in one-letter code: Speriolin (480 aa).

Positions 1–76 are necessary for targeting to centrosomes; it reads MSLLTSYEGL…HQGVFLPPAS (76 aa). The stretch at 2 to 45 forms a coiled coil; that stretch reads SLLTSYEGLRHQIERLVRENEELKKLVRLIRENQELKSAIKTQA. Disordered regions lie at residues 252–297 and 305–324; these read INNI…SRVM and VEME…DNPR.

This sequence belongs to the speriolin family. As to quaternary structure, found in a complex with CDC20, CDC27 and TUBG1. Interacts with CDC20. In terms of tissue distribution, expressed in testis. Expressed in pachyten spermatocytes, spermatids and epididymal sperm (at protein level).

The protein resides in the cytoplasm. Its subcellular location is the cytoskeleton. It is found in the microtubule organizing center. The protein localises to the centrosome. The polypeptide is Speriolin (Spatc1) (Mus musculus (Mouse)).